The following is a 397-amino-acid chain: Growth-regulating factor 1 (397 aa).

The QLQ domain maps to 18 to 53 (PFTASQWQELEHQALIYKYMASGTPIPSDLILPLRR). 2 short sequence motifs (bipartite nuclear localization signal) span residues 86–105 (RKAEDPEPGRCRRTDGKKWR) and 123–130 (RGKNRSRK). Residues 90–134 (DPEPGRCRRTDGKKWRCSKEAYPDSKYCEKHMHRGKNRSRKPVEM) enclose the WRC domain. A disordered region spans residues 117–176 (CEKHMHRGKNRSRKPVEMSLATPPPPSSSATSAASNTSAGVAPTTTTTSSPAPSYSRPAP). A compositionally biased stretch (basic residues) spans 120 to 129 (HMHRGKNRSR). Residues 144 to 174 (SSATSAASNTSAGVAPTTTTTSSPAPSYSRP) show a composition bias toward low complexity.

The protein belongs to the GRF family.

The protein localises to the nucleus. Functionally, transcription activator that plays a regulatory role in gibberellin-induced stem elongation. The polypeptide is Growth-regulating factor 1 (GRF1) (Oryza sativa subsp. japonica (Rice)).